A 495-amino-acid polypeptide reads, in one-letter code: Sialin (495 aa).

A compositionally biased stretch (basic and acidic residues) spans 1 to 18; that stretch reads MRSPVRDLARNDGEESTD. Residues 1–24 are disordered; sequence MRSPVRDLARNDGEESTDRTPLLP. Residues 1–41 are Cytoplasmic-facing; it reads MRSPVRDLARNDGEESTDRTPLLPGAPRAEAAPVCCSARYN. Position 3 is a phosphoserine (serine 3). The Dileucine internalization motif motif lies at 22-23; the sequence is LL. Residues 42 to 62 traverse the membrane as a helical segment; that stretch reads LAILAFFGFFIVYALRVNLSV. At 63–109 the chain is on the lumenal side; sequence ALVDMVDSNTTLEDNRTSKACPEHSAPIKVHHNQTGKKYQWDAETQG. N-linked (GlcNAc...) asparagine glycosylation is found at asparagine 71, asparagine 77, and asparagine 95. Residues 110–130 traverse the membrane as a helical segment; that stretch reads WILGSFFYGYIITQIPGGYVA. At 131-136 the chain is on the cytoplasmic side; that stretch reads SKIGGK. Residues 137–157 traverse the membrane as a helical segment; that stretch reads MLLGFGILGTAVLTLFTPIAA. Residue aspartate 158 is a topological domain, lumenal. The helical transmembrane segment at 159 to 179 threads the bilayer; sequence LGVGPLIVLRALEGLGEGVTF. Over 180 to 200 the chain is Cytoplasmic; sequence PAMHAMWSSWAPPLERSKLLS. A helical transmembrane segment spans residues 201-221; that stretch reads ISYAGAQLGTVISLPLSGIIC. Residues 222-227 are Lumenal-facing; the sequence is YYMNWT. Residues 228-248 form a helical membrane-spanning segment; that stretch reads YVFYFFGTIGIFWFLLWIWLV. Topologically, residues 249-279 are cytoplasmic; that stretch reads SDTPQKHKRISHYEKEYILSSLRNQLSSQKS. The chain crosses the membrane as a helical span at residues 280-300; the sequence is VPWVPILKSLPLWAIVVAHFS. Topologically, residues 301-328 are lumenal; sequence YNWTFYTLLTLLPTYMKEILRFNVQENG. Residues 329 to 349 form a helical membrane-spanning segment; sequence FLSSLPYLGSWLCMILSGQAA. Residues 350–365 are Cytoplasmic-facing; sequence DNLRAKWNFSTLCVRR. Residues 366 to 386 form a helical membrane-spanning segment; it reads IFSLIGMIGPAVFLVAAGFIG. Topologically, residues 387–391 are lumenal; the sequence is CDYSL. A helical transmembrane segment spans residues 392-412; it reads AVAFLTISTTLGGFCSSGFSI. The Cytoplasmic segment spans residues 413–423; it reads NHLDIAPSYAG. A helical transmembrane segment spans residues 424-444; the sequence is ILLGITNTFATIPGMVGPVIA. At 445-457 the chain is on the lumenal side; sequence KSLTPDNTVGEWQ. A helical membrane pass occupies residues 458-478; the sequence is TVFYIAAAINVFGAIFFTLFA. Residues 479–495 are Cytoplasmic-facing; that stretch reads KGEVQNWALNDHHGHRH.

Belongs to the major facilitator superfamily. Sodium/anion cotransporter family. In terms of tissue distribution, in the adult, detected in placenta, kidney and pancreas. Abundant in the endothelial cells of tumors from ovary, colon, breast and lung, but is not detected in endothelial cells from the corresponding normal tissues. Highly expressed in salivary glands and liver, with lower levels of expression in brain, spleen kidney, muscle and pancreas. Expressed in acinar cells of salivary glands (at protein level).

The protein resides in the basolateral cell membrane. Its subcellular location is the cytoplasmic vesicle. The protein localises to the secretory vesicle. It localises to the synaptic vesicle membrane. It is found in the lysosome membrane. The enzyme catalyses N-acetylneuraminate(in) + H(+)(in) = N-acetylneuraminate(out) + H(+)(out). The catalysed reaction is D-glucuronate(out) + H(+)(out) = D-glucuronate(in) + H(+)(in). It catalyses the reaction 2 nitrate(out) + H(+)(out) = 2 nitrate(in) + H(+)(in). It carries out the reaction L-aspartate(out) = L-aspartate(in). The enzyme catalyses L-glutamate(out) = L-glutamate(in). The catalysed reaction is N-acetyl-L-aspartyl-L-glutamate(out) = N-acetyl-L-aspartyl-L-glutamate(in). In terms of biological role, multifunctional anion transporter that operates via two distinct transport mechanisms, namely proton-coupled anion cotransport and membrane potential-dependent anion transport. Electroneutral proton-coupled acidic monosaccharide symporter, with a sugar to proton stoichiometry of 1:1. Exports glucuronic acid and free sialic acid derived from sialoglycoconjugate degradation out of lysosomes, driven by outwardly directed lysosomal pH gradient. May regulate lysosome function and metabolism of sialylated conjugates that impact oligodendrocyte lineage differentiation and myelinogenesis in the central nervous system. Electrogenic proton-coupled nitrate symporter that transports nitrate ions across the basolateral membrane of salivary gland acinar cells, with nitrate to proton stoichiometry of 2:1. May contribute to nitrate clearance from serum by salivary glands, where it is further concentrated and secreted in the saliva. Uses membrane potential to drive the uptake of acidic amino acids and peptides into synaptic vesicles. Responsible for synaptic vesicular storage of L-aspartate and L-glutamate in pinealocytes as well as vesicular uptake of N-acetyl-L-aspartyl-L-glutamate neuropeptide, relevant to aspartegic-associated glutamatergic neurotransmission and activation of metabotropic receptors that inhibit subsequent transmitter release. Receptor for CM101, a polysaccharide produced by group B Streptococcus with antipathoangiogenic properties. In Homo sapiens (Human), this protein is Sialin (SLC17A5).